A 190-amino-acid chain; its full sequence is Imidazole glycerol phosphate synthase subunit HisH (190 aa).

The Glutamine amidotransferase type-1 domain maps to 2–190; that stretch reads IVGVVDYTVG…IKRFLAVAKR (189 aa). The active-site Nucleophile is the Cys-73. Residues His-169 and Glu-171 contribute to the active site.

As to quaternary structure, heterodimer of HisH and HisF.

It localises to the cytoplasm. The catalysed reaction is 5-[(5-phospho-1-deoxy-D-ribulos-1-ylimino)methylamino]-1-(5-phospho-beta-D-ribosyl)imidazole-4-carboxamide + L-glutamine = D-erythro-1-(imidazol-4-yl)glycerol 3-phosphate + 5-amino-1-(5-phospho-beta-D-ribosyl)imidazole-4-carboxamide + L-glutamate + H(+). It carries out the reaction L-glutamine + H2O = L-glutamate + NH4(+). It functions in the pathway amino-acid biosynthesis; L-histidine biosynthesis; L-histidine from 5-phospho-alpha-D-ribose 1-diphosphate: step 5/9. In terms of biological role, IGPS catalyzes the conversion of PRFAR and glutamine to IGP, AICAR and glutamate. The HisH subunit catalyzes the hydrolysis of glutamine to glutamate and ammonia as part of the synthesis of IGP and AICAR. The resulting ammonia molecule is channeled to the active site of HisF. The protein is Imidazole glycerol phosphate synthase subunit HisH of Pyrobaculum aerophilum (strain ATCC 51768 / DSM 7523 / JCM 9630 / CIP 104966 / NBRC 100827 / IM2).